A 1391-amino-acid chain; its full sequence is Axoneme-associated protein mst101(2) (1391 aa).

Disordered stretches follow at residues 170 to 213 (ECNQ…GKKL) and 280 to 300 (SSEP…EKEL). The span at 184–201 (TKKGKTKGKSGGGNKKRS) shows a compositional bias: basic residues. The segment covering 291–300 (KNDEKKEKEL) has biased composition (basic and acidic residues). Repeat copies occupy residues 332 to 347 (KKKC…EEAE), 348 to 363 (KKKC…EEDE), 364 to 379 (KKAC…EADE), 380 to 395 (KKKC…KAAE), 396 to 411 (KKKC…EAAE), 412 to 427 (KKKC…EAAE), 428 to 443 (RKKC…KAAE), 444 to 459 (KKKC…EAAE), 460 to 475 (RKKC…KAAE), 476 to 491 (KKKC…EVAE), 492 to 507 (RKKC…KAEI), 508 to 523 (KKKC…ETAE), 524 to 539 (KKKC…EAAE), 540 to 555 (KKKC…EAAE), 556 to 571 (KKKC…EAAE), 572 to 587 (KKKC…EAAE), 588 to 603 (KKKC…EVAE), 604 to 619 (RKKC…KAAE), 620 to 635 (KKKC…EAAE), 636 to 651 (REKC…KAAE), 652 to 667 (KKKC…ETAE), 668 to 683 (KKKC…EAAE), 684 to 699 (KKKC…EAAE), 700 to 715 (KKKC…EAAE), 716 to 731 (RKKC…KAAE), 732 to 747 (KKKC…AGEK), 748 to 763 (NKLK…ALKE), 764 to 779 (KKKC…AEKK), 780 to 795 (KCKE…AEKK), 796 to 811 (KCEK…AEKK), 812 to 827 (KCEK…AEKK), 828 to 843 (KCEK…AEKK), 844 to 859 (KCEK…AEKK), 860 to 875 (KCEK…AEKK), 876 to 891 (KCEK…AEKK), 892 to 907 (KCAE…AEKK), 908 to 923 (KCEE…AERK), 924 to 939 (KCEE…AEKK), 940 to 955 (KCKK…GEKN), 956 to 971 (KLKK…CKKL), 972 to 987 (GKKS…CAEA), 988 to 1003 (AKKE…CEER), 1004 to 1019 (AKKQ…CEER), 1020 to 1035 (AKKL…CEER), 1036 to 1051 (AKKL…CEER), 1052 to 1067 (AKKL…CEER), 1068 to 1083 (AKKL…CEER), 1084 to 1099 (AKKE…CEER), 1100 to 1115 (AKKL…CEER), 1116 to 1131 (AKKE…CEEA), 1132 to 1147 (AKRE…CAEA), 1148 to 1163 (AKKE…CAEA), 1164 to 1179 (AKKE…CAEA), 1180 to 1195 (AKRE…CADL), 1196 to 1211 (AKKE…CEEA), 1212 to 1227 (AKKE…CAKA), 1228 to 1243 (AKKE…CAEA), 1244 to 1259 (AKKE…CAEA), and 1260 to 1275 (AKKE…CEKA). The tract at residues 332 to 1275 (KKKCKDLGRK…AEKKRKCEKA (944 aa)) is 59 X 16 AA approximate tandem repeats of [KR]-K-X-C-X-X-X-A-K-X-X-K-X-X-X-E. Residues 370-429 (LAKKKKEADEKKKCEEAANKEKKAAEKKKCEKAAKERKEAAEKKKCEEAAKKEKEAAERK) are disordered. The segment at 516–577 (KKEKETAEKK…EAAEKKKCEK (62 aa)) is disordered. The span at 517–577 (KEKETAEKKK…EAAEKKKCEK (61 aa)) shows a compositional bias: basic and acidic residues. Positions 729–765 (AAEKKKCKKLAKKKKAGEKNKLKKGNKKGKKALKEKK) are enriched in basic residues. Disordered regions lie at residues 729–881 (AAEK…EKAA), 900–922 (EKEL…VAER), and 934–1013 (KAAE…AAEK). Residues 766-881 (KCRELAKKKA…AEKKKCEKAA (116 aa)) are compositionally biased toward basic and acidic residues. Composition is skewed to basic residues over residues 934–949 (KAAE…KKEK) and 956–976 (KLKK…KKSK). The segment covering 977–1013 (RAAEKKKCAEAAKKEKEAATKKKCEERAKKQKEAAEK) has biased composition (basic and acidic residues). 2 disordered regions span residues 1076–1095 (EKKQ…EKKQ) and 1104–1212 (KEAA…EEAA). A compositionally biased stretch (basic and acidic residues) spans 1353-1370 (KKEKEAAEKKKRCKDLAK). The interval 1353–1391 (KKEKEAAEKKKRCKDLAKNKKKGHKKKGRNENRKKRTDC) is disordered. Residues 1371–1391 (NKKKGHKKKGRNENRKKRTDC) are compositionally biased toward basic residues.

As to expression, testis. Primary spermatocytes and early spermatids.

It localises to the cytoplasm. Its function is as follows. Possible structural role in the sperm tail. This Drosophila hydei (Fruit fly) protein is Axoneme-associated protein mst101(2) (mst101(2)).